The primary structure comprises 71 residues: UPF0346 protein SSU05_1322 (71 aa).

It belongs to the UPF0346 family.

The protein is UPF0346 protein SSU05_1322 of Streptococcus suis (strain 05ZYH33).